We begin with the raw amino-acid sequence, 108 residues long: Integration host factor subunit alpha (108 aa).

The protein belongs to the bacterial histone-like protein family. In terms of assembly, heterodimer of an alpha and a beta chain.

Its function is as follows. This protein is one of the two subunits of integration host factor, a specific DNA-binding protein that functions in genetic recombination as well as in transcriptional and translational control. The chain is Integration host factor subunit alpha from Bartonella henselae (strain ATCC 49882 / DSM 28221 / CCUG 30454 / Houston 1) (Rochalimaea henselae).